Consider the following 271-residue polypeptide: Putative phosphoenolpyruvate synthase regulatory protein (271 aa).

Residue 152–159 participates in ADP binding; it reads GVSRSGKT.

Belongs to the pyruvate, phosphate/water dikinase regulatory protein family. PSRP subfamily.

It carries out the reaction [pyruvate, water dikinase] + ADP = [pyruvate, water dikinase]-phosphate + AMP + H(+). The enzyme catalyses [pyruvate, water dikinase]-phosphate + phosphate + H(+) = [pyruvate, water dikinase] + diphosphate. In terms of biological role, bifunctional serine/threonine kinase and phosphorylase involved in the regulation of the phosphoenolpyruvate synthase (PEPS) by catalyzing its phosphorylation/dephosphorylation. The sequence is that of Putative phosphoenolpyruvate synthase regulatory protein from Thiocapsa roseopersicina.